An 802-amino-acid chain; its full sequence is Fibroblast growth factor receptor 4 (802 aa).

Positions 1-21 (MRLLLALLGVLLSVPGPPVLS) are cleaved as a signal peptide. In terms of domain architecture, Ig-like C2-type 1 spans 22–118 (LEASEEVELE…VLQNLTLITG (97 aa)). The Extracellular segment spans residues 22–369 (LEASEEVELE…AAAPEARYTD (348 aa)). Cys-57 and Cys-101 are oxidised to a cystine. A glycan (N-linked (GlcNAc...) asparagine) is linked at Asn-112. Positions 119-148 (DSLTSSNDDEDPKSHRDPSNRHSYPQQAPY) are disordered. Ig-like C2-type domains lie at 152–240 (PQRM…YLLD) and 249–349 (PILQ…AWLT). An intrachain disulfide couples Cys-172 to Cys-224. Asn-258, Asn-290, Asn-311, and Asn-322 each carry an N-linked (GlcNAc...) asparagine glycan. Residues Cys-271 and Cys-333 are joined by a disulfide bond. The chain crosses the membrane as a helical span at residues 370 to 390 (IILYASGSLALAVLLLLAGLY). Tyr-390 is subject to Phosphotyrosine; in variant R-388. The Cytoplasmic segment spans residues 391–802 (RGQALHGRHP…SFPFGSGVQT (412 aa)). Residues 467–755 (LVLGKPLGEG…VLLAVSEEYL (289 aa)) enclose the Protein kinase domain. ATP-binding positions include 473 to 481 (LGEGCFGQV) and Lys-503. Ser-573 carries the post-translational modification Phosphoserine. The active-site Proton acceptor is the Asp-612. Residues Tyr-642, Tyr-643, and Tyr-754 each carry the phosphotyrosine; by autocatalysis modification.

This sequence belongs to the protein kinase superfamily. Tyr protein kinase family. Fibroblast growth factor receptor subfamily. In terms of assembly, monomer. Homodimer after ligand binding. Interacts with FGF1, FGF2, FGF4, FGF6, FGF8, FGF9, FGF16, FGF17, FGF18, FGF19, FGF21 and FGF23 (in vitro). Binding affinity for FGF family members is enhanced by interactions between FGFs and heparan sulfate proteoglycans. Interacts with KLB; this strongly increases the affinity for FGF19 and FGF23. Affinity for FGF19 is strongly increased by KLB and sulfated glycosaminoglycans. KLB and KL both interact with the core-glycosylated FGFR4 in the endoplasmic reticulum and promote its degradation, so that only FGFR4 with fully mature N-glycans is expressed at the cell surface. Identified in a complex with NCAM1, CDH2, PLCG1, FRS2, SRC, SHC1, GAP43 and CTTN. Interacts with MMP14 and HIP1. Interacts with STAT3. N-glycosylated. Full maturation of the glycan chains in the Golgi is essential for high affinity interaction with FGF19. Post-translationally, ubiquitinated. Subject to proteasomal degradation when not fully glycosylated. In terms of processing, autophosphorylated. Binding of FGF family members together with heparan sulfate proteoglycan or heparin promotes receptor dimerization and autophosphorylation on tyrosine residues. Autophosphorylation occurs in trans between the two FGFR molecules present in the dimer. As to expression, expressed in gastrointestinal epithelial cells, pancreas, and gastric and pancreatic cancer cell lines.

The protein resides in the cell membrane. The protein localises to the endosome. Its subcellular location is the endoplasmic reticulum. It localises to the secreted. It carries out the reaction L-tyrosyl-[protein] + ATP = O-phospho-L-tyrosyl-[protein] + ADP + H(+). With respect to regulation, present in an inactive conformation in the absence of bound ligand. Ligand binding leads to dimerization and activation by autophosphorylation on tyrosine residues. Its function is as follows. Tyrosine-protein kinase that acts as a cell-surface receptor for fibroblast growth factors and plays a role in the regulation of cell proliferation, differentiation and migration, and in regulation of lipid metabolism, bile acid biosynthesis, glucose uptake, vitamin D metabolism and phosphate homeostasis. Required for normal down-regulation of the expression of CYP7A1, the rate-limiting enzyme in bile acid synthesis, in response to FGF19. Phosphorylates PLCG1 and FRS2. Ligand binding leads to the activation of several signaling cascades. Activation of PLCG1 leads to the production of the cellular signaling molecules diacylglycerol and inositol 1,4,5-trisphosphate. Phosphorylation of FRS2 triggers recruitment of GRB2, GAB1, PIK3R1 and SOS1, and mediates activation of RAS, MAPK1/ERK2, MAPK3/ERK1 and the MAP kinase signaling pathway, as well as of the AKT1 signaling pathway. Promotes SRC-dependent phosphorylation of the matrix protease MMP14 and its lysosomal degradation. FGFR4 signaling is down-regulated by receptor internalization and degradation; MMP14 promotes internalization and degradation of FGFR4. Mutations that lead to constitutive kinase activation or impair normal FGFR4 inactivation lead to aberrant signaling. This Homo sapiens (Human) protein is Fibroblast growth factor receptor 4 (FGFR4).